The primary structure comprises 382 residues: Membrane protein MLC1 (382 aa).

Over residues 1 to 28 (MTREGQFREELGYDRMPTLERGRQDAGR) the composition is skewed to basic and acidic residues. A disordered region spans residues 1 to 43 (MTREGQFREELGYDRMPTLERGRQDAGRQDPGSYTPDSKPKDL). The next 4 helical transmembrane spans lie at 58-78 (WVFS…SLYL), 88-107 (YLRC…FAVG), 117-137 (FQIL…WFGC), and 148-168 (INFN…TVII). 3 positions are modified to phosphoserine: Ser183, Ser185, and Ser188. Transmembrane regions (helical) follow at residues 205 to 225 (SVVE…ALNV), 234 to 254 (LSVT…ASHV), 263 to 283 (LVEV…TASG), and 309 to 329 (LLLL…GTAI).

In terms of assembly, interacts with ATP1B1. Part of a complex containing ATP1B1, TRPV4, AQP4 and HEPACAM.

Its subcellular location is the membrane. The protein localises to the cell membrane. It localises to the cytoplasm. The protein resides in the perinuclear region. It is found in the endoplasmic reticulum. Its function is as follows. Transmembrane protein mainly expressed in brain astrocytes that may play a role in transport across the blood-brain and brain-cerebrospinal fluid barriers. Regulates the response of astrocytes to hypo-osmosis by promoting calcium influx. May function as regulatory protein of membrane protein complexes such as ion channels. The sequence is that of Membrane protein MLC1 from Mus musculus (Mouse).